A 546-amino-acid polypeptide reads, in one-letter code: Chaperonin GroEL (546 aa).

ATP-binding positions include 30-33 (TLGP), Lys51, 87-91 (DGTTT), Gly415, 479-481 (NAA), and Asp495. Positions 525-546 (PEPKKDMPPMPGGGMGGMGGMY) are disordered. Positions 536-546 (GGGMGGMGGMY) are enriched in gly residues.

Belongs to the chaperonin (HSP60) family. In terms of assembly, forms a cylinder of 14 subunits composed of two heptameric rings stacked back-to-back. Interacts with the co-chaperonin GroES.

It localises to the cytoplasm. The enzyme catalyses ATP + H2O + a folded polypeptide = ADP + phosphate + an unfolded polypeptide.. Together with its co-chaperonin GroES, plays an essential role in assisting protein folding. The GroEL-GroES system forms a nano-cage that allows encapsulation of the non-native substrate proteins and provides a physical environment optimized to promote and accelerate protein folding. The chain is Chaperonin GroEL from Solidesulfovibrio magneticus (strain ATCC 700980 / DSM 13731 / RS-1) (Desulfovibrio magneticus).